A 287-amino-acid polypeptide reads, in one-letter code: MKTQDMNRDWISTASTLNKALPYLQRYAGATVVIKLGGHSMGSDEAMDEFARDVVLMRQVGVNPVIVHGGGPMINAMLDKLDIKSEFVNGKRVTDRATMDVVEMVLSGLVNKRIVQAINGQGGCAVGISGKDARLITCCQTDPDLGFVGTPQDVDPRLLRDLTEKEYIPVIAPLGADQTGQTYNINGDTAAGAVAAALKADRLLLLTDVAGVKNDAGDVLTELSAKQIEDMTRDGTIAGGMIPKTETALAALRGGVRAAVILDGRAPNACLLELFTEHGAGSIIRAD.

Substrate contacts are provided by residues 70 to 71 (GG), R92, and N184.

Belongs to the acetylglutamate kinase family. ArgB subfamily.

The protein localises to the cytoplasm. The enzyme catalyses N-acetyl-L-glutamate + ATP = N-acetyl-L-glutamyl 5-phosphate + ADP. The protein operates within amino-acid biosynthesis; L-arginine biosynthesis; N(2)-acetyl-L-ornithine from L-glutamate: step 2/4. Its function is as follows. Catalyzes the ATP-dependent phosphorylation of N-acetyl-L-glutamate. The chain is Acetylglutamate kinase from Roseobacter denitrificans (strain ATCC 33942 / OCh 114) (Erythrobacter sp. (strain OCh 114)).